Consider the following 158-residue polypeptide: Anaerobic ribonucleoside-triphosphate reductase-activating protein (158 aa).

Positions 26, 30, and 33 each coordinate [4Fe-4S] cluster. S-adenosyl-L-methionine contacts are provided by residues glycine 32–tyrosine 34 and glycine 74.

The protein belongs to the organic radical-activating enzymes family. As to quaternary structure, forms a tetramer composed of two NrdD and two NrdG subunits. Requires [4Fe-4S] cluster as cofactor.

The protein localises to the cytoplasm. The catalysed reaction is glycyl-[protein] + reduced [flavodoxin] + S-adenosyl-L-methionine = glycin-2-yl radical-[protein] + semiquinone [flavodoxin] + 5'-deoxyadenosine + L-methionine + H(+). Activation of anaerobic ribonucleoside-triphosphate reductase under anaerobic conditions by generation of an organic free radical, using S-adenosylmethionine and reduced flavodoxin as cosubstrates to produce 5'-deoxy-adenosine. In Pasteurella multocida (strain Pm70), this protein is Anaerobic ribonucleoside-triphosphate reductase-activating protein (nrdG).